The primary structure comprises 68 residues: UPF0291 protein TTE2340 (68 aa).

Belongs to the UPF0291 family.

It localises to the cytoplasm. In Caldanaerobacter subterraneus subsp. tengcongensis (strain DSM 15242 / JCM 11007 / NBRC 100824 / MB4) (Thermoanaerobacter tengcongensis), this protein is UPF0291 protein TTE2340.